The sequence spans 402 residues: Major outer membrane porin (402 aa).

The signal sequence occupies residues 1–22; sequence MKKLLKSALLFAATGSALSLQA.

It belongs to the chlamydial porin (CP) (TC 1.B.2) family. In terms of assembly, part of a disulfide cross-linked outer membrane complex (COMC) composed of the major outer membrane porin, the small cysteine-rich protein (OmcA) and the large cysteine-rich periplasmic protein (OmcB).

Its subcellular location is the cell outer membrane. Functionally, in elementary bodies (EBs, the infectious stage, which is able to survive outside the host cell) provides the structural integrity of the outer envelope through disulfide cross-links with the small cysteine-rich protein and the large cysteine-rich periplasmic protein. It has been described in publications as the Sarkosyl-insoluble COMC (Chlamydia outer membrane complex), and serves as the functional equivalent of peptidoglycan. Its function is as follows. Permits diffusion of specific solutes through the outer membrane. This is Major outer membrane porin (ompA) from Chlamydia psittaci (Chlamydophila psittaci).